Here is a 720-residue protein sequence, read N- to C-terminus: Armadillo repeat-containing protein 8 (720 aa).

ARM repeat units follow at residues 51 to 92, 95 to 134, 138 to 176, 178 to 217, 224 to 265, 269 to 309, 313 to 352, 421 to 460, 463 to 502, 505 to 544, 548 to 587, 590 to 632, 635 to 674, and 681 to 720; these read NKQK…SLSM, ENNV…TVFT, TPVE…HCCK, PDHQ…VLAF, MTLA…YMCR, IRTD…YLIE, ELQR…ETGQ, DIRK…SLSR, QQLR…NLLL, SPSK…NMAF, QKIK…NLLS, PHID…NIAD, TAKD…NLTW, and QERQ…QYFA.

Identified in the CTLH complex that contains at least MAEA, RMND5A (or alternatively its paralog RMND5B), GID8, WDR26, and RANBP9 and/or RANBP10; ARMC8 has an ancillary role in the complex.

Its subcellular location is the nucleus. It localises to the cytoplasm. Component of the CTLH E3 ubiquitin-protein ligase complex that mediates ubiquitination and subsequent proteasomal degradation of target proteins. This Xenopus laevis (African clawed frog) protein is Armadillo repeat-containing protein 8 (armc8).